The primary structure comprises 605 residues: UvrABC system protein C (605 aa).

Residues 13-92 (TSPGVYLMKD…IKKHHPKYNV (80 aa)) enclose the GIY-YIG domain. Residues 205–240 (SEIIQDLEKSIEKASQEQKFEQAGIYYRTLKLIQQA) form the UVR domain.

This sequence belongs to the UvrC family. In terms of assembly, interacts with UvrB in an incision complex.

The protein localises to the cytoplasm. In terms of biological role, the UvrABC repair system catalyzes the recognition and processing of DNA lesions. UvrC both incises the 5' and 3' sides of the lesion. The N-terminal half is responsible for the 3' incision and the C-terminal half is responsible for the 5' incision. This is UvrABC system protein C from Chlamydia caviae (strain ATCC VR-813 / DSM 19441 / 03DC25 / GPIC) (Chlamydophila caviae).